The sequence spans 35 residues: Photosystem II reaction center protein T (35 aa).

Residues 3 to 23 form a helical membrane-spanning segment; it reads ALVYTFLLVGTLGIIFFAIFF.

Belongs to the PsbT family. As to quaternary structure, PSII is composed of 1 copy each of membrane proteins PsbA, PsbB, PsbC, PsbD, PsbE, PsbF, PsbH, PsbI, PsbJ, PsbK, PsbL, PsbM, PsbT, PsbY, PsbZ, Psb30/Ycf12, at least 3 peripheral proteins of the oxygen-evolving complex and a large number of cofactors. It forms dimeric complexes.

The protein localises to the plastid. It is found in the chloroplast thylakoid membrane. Functionally, found at the monomer-monomer interface of the photosystem II (PS II) dimer, plays a role in assembly and dimerization of PSII. PSII is a light-driven water plastoquinone oxidoreductase, using light energy to abstract electrons from H(2)O, generating a proton gradient subsequently used for ATP formation. This is Photosystem II reaction center protein T from Zygnema circumcarinatum (Green alga).